We begin with the raw amino-acid sequence, 93 residues long: Defensin-like protein 209 (93 aa).

Positions 1–19 (MKITILFLTLLVLSSSCTS) are cleaved as a signal peptide. Intrachain disulfides connect Cys-63–Cys-80, Cys-66–Cys-85, and Cys-70–Cys-87.

It belongs to the DEFL family.

The protein localises to the secreted. The chain is Defensin-like protein 209 from Arabidopsis thaliana (Mouse-ear cress).